Reading from the N-terminus, the 174-residue chain is UPF0340 protein MW2038 (174 aa).

This sequence belongs to the UPF0340 family.

This is UPF0340 protein MW2038 from Staphylococcus aureus (strain MW2).